A 1174-amino-acid chain; its full sequence is PR domain zinc finger protein 15 (1174 aa).

The SET domain maps to 75 to 185 (SNLEIRRLDD…AGTELRVWYA (111 aa)). The interval 252 to 307 (LPAGGQQHEAASEKEPDAPRMEPPTAAESKSIQSVMVTKEPKKKPRRGRKPKASKV) is disordered. Residues 261 to 271 (AASEKEPDAPR) are compositionally biased toward basic and acidic residues. The segment covering 292–304 (PKKKPRRGRKPKA) has biased composition (basic residues). 2 consecutive C2H2-type zinc fingers follow at residues 402 to 424 (HQCG…VRSH) and 434 to 457 (FKCE…SYKH). The segment at 468–486 (YRCGSCGKTFRMESALEFH) adopts a C2H2-type 3; degenerate zinc-finger fold. C2H2-type zinc fingers lie at residues 495 to 517 (FQCE…KKKH) and 522 to 544 (FACE…QRRH). Residue lysine 552 forms a Glycyl lysine isopeptide (Lys-Gly) (interchain with G-Cter in SUMO2) linkage. C2H2-type zinc fingers lie at residues 571 to 593 (SGCP…LLTH) and 598 to 620 (YTCE…IHVH). The interval 639–658 (IGISSEENDDNSDESADSEP) is disordered. The segment covering 644–655 (EENDDNSDESAD) has biased composition (acidic residues). C2H2-type zinc fingers lie at residues 661-684 (YSCK…MEVH), 689-711 (HGCS…MVIH), 725-747 (HPCE…KLIH), 753-775 (HACE…MRVH), 781-803 (YLCA…MKLH), 809-831 (YECK…YKRH), 837-859 (FMCE…KLIH), and 865-888 (WTCS…QLTH). 2 disordered regions span residues 957 to 1007 (AEGK…GDET) and 1147 to 1174 (LQPP…MYSY). Residues 962–973 (GKAAKRSHKRKQ) show a composition bias toward basic residues. The span at 1154 to 1174 (AAPQQAVQPQVQNEQQQMYSY) shows a compositional bias: low complexity.

In terms of tissue distribution, expressed in embryonic stem cells (ESCs) (at protein level).

It is found in the nucleus. Sequence-specific DNA-binding transcriptional regulator. Plays a role as a molecular node in a transcriptional network regulating embryonic development and cell fate decision. Stimulates the expression of upstream key transcriptional activators and repressors of the Wnt/beta-catenin and MAPK/ERK pathways, respectively, that are essential for naive pluripotency and self-renewal maintenance of embryonic stem cells (ESCs). Specifically promotes SPRY1 and RSPO1 transcription activation through recognition and direct binding of a specific DNA sequence in their promoter regions. Also plays a role in induced pluripotent stem cells (iPSCs) reprogramming. Involved in early embryo development. This chain is PR domain zinc finger protein 15, found in Mus musculus (Mouse).